Consider the following 300-residue polypeptide: Phosphatidylglycerol--prolipoprotein diacylglyceryl transferase (300 aa).

7 helical membrane-spanning segments follow: residues 17–37, 59–79, 94–114, 129–149, 204–224, 230–250, and 265–285; these read LAIR…LWFG, MLFY…VLFY, VWEG…AMML, FIAP…FING, SQIY…WLYA, MGAV…AAEF, and LSMG…MLVW. Position 142 (R142) interacts with a 1,2-diacyl-sn-glycero-3-phospho-(1'-sn-glycerol).

It belongs to the Lgt family.

Its subcellular location is the cell inner membrane. The catalysed reaction is L-cysteinyl-[prolipoprotein] + a 1,2-diacyl-sn-glycero-3-phospho-(1'-sn-glycerol) = an S-1,2-diacyl-sn-glyceryl-L-cysteinyl-[prolipoprotein] + sn-glycerol 1-phosphate + H(+). Its pathway is protein modification; lipoprotein biosynthesis (diacylglyceryl transfer). Catalyzes the transfer of the diacylglyceryl group from phosphatidylglycerol to the sulfhydryl group of the N-terminal cysteine of a prolipoprotein, the first step in the formation of mature lipoproteins. The polypeptide is Phosphatidylglycerol--prolipoprotein diacylglyceryl transferase (Ralstonia pickettii (strain 12J)).